Consider the following 315-residue polypeptide: Homoserine kinase (315 aa).

97–107 lines the ATP pocket; it reads PPARGLGSSAT.

Belongs to the GHMP kinase family. Homoserine kinase subfamily.

Its subcellular location is the cytoplasm. The catalysed reaction is L-homoserine + ATP = O-phospho-L-homoserine + ADP + H(+). The protein operates within amino-acid biosynthesis; L-threonine biosynthesis; L-threonine from L-aspartate: step 4/5. Functionally, catalyzes the ATP-dependent phosphorylation of L-homoserine to L-homoserine phosphate. The protein is Homoserine kinase of Prochlorococcus marinus (strain NATL2A).